A 513-amino-acid chain; its full sequence is 2,3-bisphosphoglycerate-independent phosphoglycerate mutase (513 aa).

Mn(2+) contacts are provided by D13 and S63. S63 acts as the Phosphoserine intermediate in catalysis. Substrate contacts are provided by residues H124, 154–155, R186, R192, 262–265, and K335; these read RD and RADR. Mn(2+)-binding residues include D402, H406, D443, H444, and H462.

Belongs to the BPG-independent phosphoglycerate mutase family. As to quaternary structure, monomer. It depends on Mn(2+) as a cofactor.

The enzyme catalyses (2R)-2-phosphoglycerate = (2R)-3-phosphoglycerate. The protein operates within carbohydrate degradation; glycolysis; pyruvate from D-glyceraldehyde 3-phosphate: step 3/5. Catalyzes the interconversion of 2-phosphoglycerate and 3-phosphoglycerate. The protein is 2,3-bisphosphoglycerate-independent phosphoglycerate mutase of Shewanella amazonensis (strain ATCC BAA-1098 / SB2B).